We begin with the raw amino-acid sequence, 294 residues long: Putative glucose-6-phosphate 1-epimerase (294 aa).

Substrate is bound by residues Arg74 and Arg99. His164 is a catalytic residue. Residue Asp208 coordinates substrate. Glu267 is an active-site residue.

Belongs to the glucose-6-phosphate 1-epimerase family. Monomer in solution.

It catalyses the reaction alpha-D-glucose 6-phosphate = beta-D-glucose 6-phosphate. In terms of biological role, probably functions as a hexose-6-phosphate 1-epimerase. This is Putative glucose-6-phosphate 1-epimerase from Salmonella typhimurium (strain LT2 / SGSC1412 / ATCC 700720).